Here is an 80-residue protein sequence, read N- to C-terminus: Raniseptin-1 (80 aa).

The N-terminal stretch at 1–22 (MAFLKKSLFLVLFLGIVSLSIC) is a signal peptide. A propeptide spanning residues 23–49 (EEEKREGEEEEKQEEENEELSEEELRE) is cleaved from the precursor.

The protein belongs to the frog skin active peptide (FSAP) family. Dermaseptin subfamily. As to expression, expressed by the skin glands.

The protein localises to the secreted. Its function is as follows. Has antibacterial activity against the Gram-negative bacteria E.coli ATCC 25922 (MIC=5 uM), P.aeruginosa ATCC 27853 (MIC=10 uM) and X.citri (MIC&lt; 2 uM), and the Gram-positive bacterium S.aureus ATCC 29313 (MIC=20 uM). Does not have hemolytic activity against human erythrocytes. The protein is Raniseptin-1 of Boana raniceps (Chaco tree frog).